The chain runs to 299 residues: Nicotinate-nucleotide pyrophosphorylase [carboxylating] (299 aa).

Positions 8–12 (FLLPP) are important for hexamer formation. Quinolinate is bound by residues R102, 138–139 (RK), 160–161 (HR), K171, E201, D222, 248–250 (SGG), and G270.

The protein belongs to the NadC/ModD family. Hexamer formed by 3 homodimers.

It carries out the reaction nicotinate beta-D-ribonucleotide + CO2 + diphosphate = quinolinate + 5-phospho-alpha-D-ribose 1-diphosphate + 2 H(+). Its pathway is cofactor biosynthesis; NAD(+) biosynthesis; nicotinate D-ribonucleotide from quinolinate: step 1/1. Involved in the catabolism of quinolinic acid (QA). The chain is Nicotinate-nucleotide pyrophosphorylase [carboxylating] (Qprt) from Rattus norvegicus (Rat).